We begin with the raw amino-acid sequence, 180 residues long: Large ribosomal subunit protein uL5 (180 aa).

The protein belongs to the universal ribosomal protein uL5 family. In terms of assembly, part of the 50S ribosomal subunit; part of the 5S rRNA/L5/L18/L25 subcomplex. Contacts the 5S rRNA and the P site tRNA. Forms a bridge to the 30S subunit in the 70S ribosome.

In terms of biological role, this is one of the proteins that bind and probably mediate the attachment of the 5S RNA into the large ribosomal subunit, where it forms part of the central protuberance. In the 70S ribosome it contacts protein S13 of the 30S subunit (bridge B1b), connecting the 2 subunits; this bridge is implicated in subunit movement. Contacts the P site tRNA; the 5S rRNA and some of its associated proteins might help stabilize positioning of ribosome-bound tRNAs. The sequence is that of Large ribosomal subunit protein uL5 from Lactobacillus helveticus (strain DPC 4571).